The sequence spans 232 residues: Large ribosomal subunit protein uL1 (232 aa).

This sequence belongs to the universal ribosomal protein uL1 family. Part of the 50S ribosomal subunit.

Its function is as follows. Binds directly to 23S rRNA. The L1 stalk is quite mobile in the ribosome, and is involved in E site tRNA release. Protein L1 is also a translational repressor protein, it controls the translation of the L11 operon by binding to its mRNA. The polypeptide is Large ribosomal subunit protein uL1 (Porphyromonas gingivalis (strain ATCC 33277 / DSM 20709 / CIP 103683 / JCM 12257 / NCTC 11834 / 2561)).